A 281-amino-acid polypeptide reads, in one-letter code: Digeranylgeranylglyceryl phosphate synthase (281 aa).

The next 8 membrane-spanning stretches (helical) occupy residues 7 to 27, 32 to 52, 72 to 91, 95 to 117, 128 to 148, 193 to 213, 214 to 234, and 258 to 278; these read ILRP…ALIT, FSVL…NVIN, GRIS…ALAS, FYLG…YYAW, ITIS…LGEV, ISGV…PSLY, LLGI…AVFL, and VGMA…TALT.

Belongs to the UbiA prenyltransferase family. DGGGP synthase subfamily. It depends on Mg(2+) as a cofactor.

It localises to the cell membrane. It catalyses the reaction sn-3-O-(geranylgeranyl)glycerol 1-phosphate + (2E,6E,10E)-geranylgeranyl diphosphate = 2,3-bis-O-(geranylgeranyl)-sn-glycerol 1-phosphate + diphosphate. Its pathway is membrane lipid metabolism; glycerophospholipid metabolism. Functionally, prenyltransferase that catalyzes the transfer of the geranylgeranyl moiety of geranylgeranyl diphosphate (GGPP) to the C2 hydroxyl of (S)-3-O-geranylgeranylglyceryl phosphate (GGGP). This reaction is the second ether-bond-formation step in the biosynthesis of archaeal membrane lipids. In Methanothermobacter thermautotrophicus (strain ATCC 29096 / DSM 1053 / JCM 10044 / NBRC 100330 / Delta H) (Methanobacterium thermoautotrophicum), this protein is Digeranylgeranylglyceryl phosphate synthase.